The following is a 173-amino-acid chain: Large ribosomal subunit protein bL17 (173 aa).

The disordered stretch occupies residues 136–173; that stretch reads AEEEAPAVEAEATEATEAPVEEAAAVEAEAPADAEKAE. Over residues 138-149 the composition is skewed to acidic residues; it reads EEAPAVEAEATE. Positions 150–166 are enriched in low complexity; that stretch reads ATEAPVEEAAAVEAEAP.

The protein belongs to the bacterial ribosomal protein bL17 family. As to quaternary structure, part of the 50S ribosomal subunit. Contacts protein L32.

In Bifidobacterium longum subsp. infantis (strain ATCC 15697 / DSM 20088 / JCM 1222 / NCTC 11817 / S12), this protein is Large ribosomal subunit protein bL17.